The primary structure comprises 412 residues: Gamma-glutamyl phosphate reductase (412 aa).

The protein belongs to the gamma-glutamyl phosphate reductase family.

It localises to the cytoplasm. The catalysed reaction is L-glutamate 5-semialdehyde + phosphate + NADP(+) = L-glutamyl 5-phosphate + NADPH + H(+). Its pathway is amino-acid biosynthesis; L-proline biosynthesis; L-glutamate 5-semialdehyde from L-glutamate: step 2/2. Functionally, catalyzes the NADPH-dependent reduction of L-glutamate 5-phosphate into L-glutamate 5-semialdehyde and phosphate. The product spontaneously undergoes cyclization to form 1-pyrroline-5-carboxylate. The sequence is that of Gamma-glutamyl phosphate reductase from Streptococcus suis (strain 98HAH33).